The following is a 441-amino-acid chain: MTQPSLNSLYSDHLRTLTARADEALQRGGFAHLVVPSGNTHYQLFDDRDYPYAVNPQFKAWLPLTRVPHSWLVYTPGKRPIVIFYQPFDYWHVVPDAPSGWWVEHCDIHIIRRPDEALALLPKQAERCAILGEAQSTLGAYVPNNPQPVLDYLEYQRAFKTAYELALLRIAQQLAVRGHRAAEAAFRAGQSEFGIHMAYCAAVGQDANELPYGNIIALNEHGAVLHYTELGQQPPQPLRSFLIDAGASAYGYASDITRTYAADPGSDFQALINAVDAAQLRMGQNVRAGVDYKQLHIDAHLALMGILKEFGVLTVSPEAALATGISAAFFPHGLGHLIGLQVHDVAGFAASDRGGRIQRPEGHPYLRLTRVLEPGMVVTIEPGVYFIDMLLDEVKKNGHAASVNWQRVEAFKPYGGIRIEDEVVCTDGNAENLTRPVFAAA.

Mn(2+)-binding residues include aspartate 244, aspartate 255, histidine 336, glutamate 381, and glutamate 420.

Belongs to the peptidase M24B family. Bacterial-type prolidase subfamily. The cofactor is Mn(2+).

It carries out the reaction Xaa-L-Pro dipeptide + H2O = an L-alpha-amino acid + L-proline. Splits dipeptides with a prolyl residue in the C-terminal position. The chain is Xaa-Pro dipeptidase from Xanthomonas oryzae pv. oryzae (strain MAFF 311018).